The chain runs to 2201 residues: Tenascin (2201 aa).

The N-terminal stretch at 1 to 22 is a signal peptide; sequence MGAMTQLLAGVFLAFLALATEG. N-linked (GlcNAc...) asparagine glycosylation occurs at asparagine 38. Serine 65 and serine 70 each carry phosphoserine. A Phosphoserine; by FAM20C modification is found at serine 72. O-linked (Xyl...) (chondroitin sulfate) serine glycosylation is present at serine 72. A coiled-coil region spans residues 118–145; that stretch reads DVKELLSRLEELENLVSSLREQCTAGAG. 2 N-linked (GlcNAc...) asparagine glycosylation sites follow: asparagine 166 and asparagine 184. One can recognise an EGF-like 1; incomplete domain in the interval 174-186; sequence CVCEPGWKGPNCS. EGF-like domains follow at residues 186-217, 217-248, 248-280, 280-311, 311-342, 342-373, 373-404, 404-435, 435-466, 466-497, 497-528, 528-559, 559-590, and 590-621; these read SEPECPGNCHLRGRCIDGQCICDDGFTGEDCS, SQLACPSDCNDQGKCVNGVCICFEGYAGADCS, SREICPVPCSEEHGTCVDGLCVCHDGFAGDDCN, NKPLCLNNCYNRGRCVENECVCDEGFTGEDCS, SELICPNDCFDRGRCINGTCYCEEGFTGEDCG, GKPTCPHACHTQGRCEEGQCVCDEGFAGVDCS, SEKRCPADCHNRGRCVDGRCECDDGFTGADCG, GELKCPNGCSGHGRCVNGQCVCDEGYTGEDCS, SQLRCPNDCHSRGRCVEGKCVCEQGFKGYDCS, SDMSCPNDCHQHGRCVNGMCVCDDGYTGEDCR, RDRQCPRDCSNRGLCVDGQCVCEDGFTGPDCA, AELSCPNDCHGQGRCVNGQCVCHEGFMGKDCK, KEQRCPSDCHGQGRCVDGQCICHEGFTGLDCG, and GQHSCPSDCNNLGQCVSGRCICNEGYSGEDCS. Disulfide bonds link cysteine 190–cysteine 200, cysteine 194–cysteine 205, cysteine 207–cysteine 216, cysteine 221–cysteine 231, cysteine 225–cysteine 236, cysteine 238–cysteine 247, cysteine 252–cysteine 263, cysteine 256–cysteine 268, cysteine 270–cysteine 279, cysteine 284–cysteine 294, cysteine 288–cysteine 299, cysteine 301–cysteine 310, cysteine 315–cysteine 325, cysteine 319–cysteine 330, cysteine 332–cysteine 341, cysteine 346–cysteine 356, cysteine 350–cysteine 361, cysteine 363–cysteine 372, cysteine 377–cysteine 387, cysteine 381–cysteine 392, cysteine 394–cysteine 403, cysteine 408–cysteine 418, cysteine 412–cysteine 423, cysteine 425–cysteine 434, cysteine 439–cysteine 449, cysteine 443–cysteine 454, cysteine 456–cysteine 465, cysteine 470–cysteine 480, cysteine 474–cysteine 485, cysteine 487–cysteine 496, cysteine 501–cysteine 511, cysteine 505–cysteine 516, cysteine 518–cysteine 527, cysteine 532–cysteine 542, cysteine 536–cysteine 547, cysteine 549–cysteine 558, cysteine 563–cysteine 573, cysteine 567–cysteine 578, cysteine 580–cysteine 589, cysteine 594–cysteine 604, cysteine 598–cysteine 609, and cysteine 611–cysteine 620. Asparagine 327 is a glycosylation site (N-linked (GlcNAc...) asparagine). Fibronectin type-III domains follow at residues 625-715, 716-804, 805-894, 895-990, 991-1075, 1076-1165, 1167-1256, 1258-1350, 1351-1439, 1440-1531, 1533-1621, 1622-1711, 1712-1801, 1802-1888, and 1889-1977; these read PPKD…LPAP, EGLK…TRLD, APSQ…TGLD, APRN…TPKD, LQVS…EQAP, ELEN…TGET, NLGE…TEEV, DMGN…LPQL, GDLA…AKEP, EIGN…ALPL, ENLT…EAEP, EVDN…TAMG, SPKE…ALDG, PSGL…TDLD, and SPRD…IGLL. Asparagine 788 carries an N-linked (GlcNAc...) asparagine glycan. A Phosphothreonine modification is found at threonine 905. Asparagine 1018, asparagine 1034, asparagine 1079, asparagine 1093, asparagine 1119, asparagine 1184, asparagine 1210, asparagine 1261, asparagine 1275, asparagine 1301, asparagine 1366, asparagine 1392, asparagine 1445, asparagine 1455, asparagine 1485, and asparagine 1534 each carry an N-linked (GlcNAc...) asparagine glycan. A glycan (N-linked (GlcNAc...) asparagine) is linked at asparagine 1809. The region spanning 1975–2190 is the Fibrinogen C-terminal domain; it reads GLLYPFPKDC…FAEMKLRPSN (216 aa). Asparagine 2162 carries an N-linked (GlcNAc...) asparagine glycan.

Belongs to the tenascin family. Homohexamer; disulfide-linked. A homotrimer may be formed in the triple coiled-coil region and may be stabilized by disulfide rings at both ends. Two of such half-hexabrachions may be disulfide linked within the central globule. Interacts with CSPG4. Interacts (via the 3rd fibronectin type-III domain) with integrin ITGA9:ITGB1. Detected in fibroblasts (at protein level).

It is found in the secreted. The protein resides in the extracellular space. It localises to the extracellular matrix. Functionally, extracellular matrix protein implicated in guidance of migrating neurons as well as axons during development, synaptic plasticity as well as neuronal regeneration. Promotes neurite outgrowth from cortical neurons grown on a monolayer of astrocytes. Ligand for integrins alpha-8/beta-1, alpha-9/beta-1, alpha-V/beta-3 and alpha-V/beta-6. In tumors, stimulates angiogenesis by elongation, migration and sprouting of endothelial cells. This chain is Tenascin (TNC), found in Homo sapiens (Human).